The following is a 413-amino-acid chain: Zinc finger CCCH domain-containing protein 6 (413 aa).

Disordered regions lie at residues 28–61, 159–191, and 333–356; these read PSQV…FGGP, DSAS…TLPA, and QPGG…RDSK. The span at 176–189 shows a compositional bias: polar residues; that stretch reads PSITDENTSTSSTL. The segment at 357 to 385 adopts a C3H1-type zinc-finger fold; it reads PKIMKACMYFNSARGCRHGANCMYQHDAT. Over residues 389 to 403 the composition is skewed to polar residues; sequence PRNLNNGNINTSDMQ. The disordered stretch occupies residues 389 to 413; that stretch reads PRNLNNGNINTSDMQNAKRMRFDRD.

This Arabidopsis thaliana (Mouse-ear cress) protein is Zinc finger CCCH domain-containing protein 6.